Here is a 493-residue protein sequence, read N- to C-terminus: Adenylyltransferase and sulfurtransferase uba4 (493 aa).

Residues Gly-99, Asp-120, 127 to 131 (SNLHR), Lys-144, and 188 to 189 (DN) contribute to the ATP site. Residues Cys-237 and Cys-240 each contribute to the Zn(2+) site. Cys-254 functions as the Glycyl thioester intermediate; for adenylyltransferase activity in the catalytic mechanism. Cys-316 and Cys-319 together coordinate Zn(2+). The 116-residue stretch at 376–491 (INKEPTIIDV…WREQIDPDWP (116 aa)) folds into the Rhodanese domain. Cys-446 acts as the Cysteine persulfide intermediate; for sulfurtransferase activity in catalysis.

In the N-terminal section; belongs to the HesA/MoeB/ThiF family. UBA4 subfamily. Zn(2+) is required as a cofactor.

It localises to the cytoplasm. The protein resides in the cytosol. It catalyses the reaction [molybdopterin-synthase sulfur-carrier protein]-C-terminal Gly-Gly + ATP + H(+) = [molybdopterin-synthase sulfur-carrier protein]-C-terminal Gly-Gly-AMP + diphosphate. The catalysed reaction is [molybdopterin-synthase sulfur-carrier protein]-C-terminal Gly-Gly-AMP + S-sulfanyl-L-cysteinyl-[cysteine desulfurase] + AH2 = [molybdopterin-synthase sulfur-carrier protein]-C-terminal-Gly-aminoethanethioate + L-cysteinyl-[cysteine desulfurase] + A + AMP + 2 H(+). It participates in tRNA modification; 5-methoxycarbonylmethyl-2-thiouridine-tRNA biosynthesis. It functions in the pathway cofactor biosynthesis; molybdopterin biosynthesis. Its function is as follows. Plays a central role in 2-thiolation of mcm(5)S(2)U at tRNA wobble positions of cytosolic tRNA(Lys), tRNA(Glu) and tRNA(Gln). Also essential during biosynthesis of the molybdenum cofactor. Acts by mediating the C-terminal thiocarboxylation of sulfur carriers urm1 and mocs2a. Its N-terminus first activates urm1 and mocs2a as acyl-adenylates (-COAMP), then the persulfide sulfur on the catalytic cysteine is transferred to urm1 and mocs2a to form thiocarboxylation (-COSH) of their C-terminus. The reaction probably involves hydrogen sulfide that is generated from the persulfide intermediate and that acts as a nucleophile towards urm1 and mocs2a. Subsequently, a transient disulfide bond is formed. Does not use thiosulfate as sulfur donor; nfs1 probably acting as a sulfur donor for thiocarboxylation reactions. In Aspergillus fumigatus (strain ATCC MYA-4609 / CBS 101355 / FGSC A1100 / Af293) (Neosartorya fumigata), this protein is Adenylyltransferase and sulfurtransferase uba4.